A 188-amino-acid chain; its full sequence is MSRLRIFDDHTPDTPFFVSKEQTQITAELHKIGITFERWEATQAIEPGATPEQVMAAYRADIDRLIATHGFKTVDVVSIAPDNPKREEMRAKFLEEHFHKEDEVRFFVAGSGLFTVHSGNKVYEIECVKNDLIAIPDGTQHWFDMGAAPYFVAIRFFTEPDGWVGHFTGTDIAQRFPRYIPEGCQSAH.

Fe(2+) is bound by residues His-97, His-99, Glu-103, and His-141. Ni(2+) contacts are provided by His-97, His-99, Glu-103, and His-141.

Belongs to the acireductone dioxygenase (ARD) family. As to quaternary structure, monomer. The cofactor is Fe(2+). It depends on Ni(2+) as a cofactor.

The enzyme catalyses 1,2-dihydroxy-5-(methylsulfanyl)pent-1-en-3-one + O2 = 3-(methylsulfanyl)propanoate + CO + formate + 2 H(+). It carries out the reaction 1,2-dihydroxy-5-(methylsulfanyl)pent-1-en-3-one + O2 = 4-methylsulfanyl-2-oxobutanoate + formate + 2 H(+). It participates in amino-acid biosynthesis; L-methionine biosynthesis via salvage pathway; L-methionine from S-methyl-5-thio-alpha-D-ribose 1-phosphate: step 5/6. In terms of biological role, catalyzes 2 different reactions between oxygen and the acireductone 1,2-dihydroxy-3-keto-5-methylthiopentene (DHK-MTPene) depending upon the metal bound in the active site. Fe-containing acireductone dioxygenase (Fe-ARD) produces formate and 2-keto-4-methylthiobutyrate (KMTB), the alpha-ketoacid precursor of methionine in the methionine recycle pathway. Ni-containing acireductone dioxygenase (Ni-ARD) produces methylthiopropionate, carbon monoxide and formate, and does not lie on the methionine recycle pathway. The sequence is that of Acireductone dioxygenase from Xylella fastidiosa (strain 9a5c).